Here is a 352-residue protein sequence, read N- to C-terminus: Ferrochelatase (352 aa).

Positions 222 and 303 each coordinate Fe cation.

Belongs to the ferrochelatase family.

Its subcellular location is the cytoplasm. It carries out the reaction heme b + 2 H(+) = protoporphyrin IX + Fe(2+). Its pathway is porphyrin-containing compound metabolism; protoheme biosynthesis; protoheme from protoporphyrin-IX: step 1/1. Functionally, catalyzes the ferrous insertion into protoporphyrin IX. The sequence is that of Ferrochelatase from Brucella abortus (strain S19).